An 83-amino-acid chain; its full sequence is Exodeoxyribonuclease 7 small subunit (83 aa).

This sequence belongs to the XseB family. Heterooligomer composed of large and small subunits.

The protein resides in the cytoplasm. The enzyme catalyses Exonucleolytic cleavage in either 5'- to 3'- or 3'- to 5'-direction to yield nucleoside 5'-phosphates.. In terms of biological role, bidirectionally degrades single-stranded DNA into large acid-insoluble oligonucleotides, which are then degraded further into small acid-soluble oligonucleotides. The chain is Exodeoxyribonuclease 7 small subunit from Rhodopseudomonas palustris (strain BisB5).